Here is a 349-residue protein sequence, read N- to C-terminus: Very-long-chain 3-oxoacyl-CoA reductase (349 aa).

A helical membrane pass occupies residues 19–39 (AIIFALLLGVFKLTVFSLKFA). Positions 65, 119, 146, 221, 225, 254, and 256 each coordinate NADP(+). The Proton donor role is filled by Tyr221. Lys225 acts as the Lowers pKa of active site Tyr in catalysis.

This sequence belongs to the short-chain dehydrogenases/reductases (SDR) family.

Its subcellular location is the endoplasmic reticulum membrane. It catalyses the reaction a very-long-chain (3R)-3-hydroxyacyl-CoA + NADP(+) = a very-long-chain 3-oxoacyl-CoA + NADPH + H(+). Its pathway is lipid metabolism; fatty acid biosynthesis. Functionally, component of the microsomal membrane bound fatty acid elongation system, which produces the 26-carbon very long-chain fatty acids (VLCFA) from palmitate. Catalyzes the reduction of the 3-ketoacyl-CoA intermediate that is formed in each cycle of fatty acid elongation. VLCFAs serve as precursors for ceramide and sphingolipids. This Candida albicans (strain SC5314 / ATCC MYA-2876) (Yeast) protein is Very-long-chain 3-oxoacyl-CoA reductase.